Here is a 349-residue protein sequence, read N- to C-terminus: Glycerol-3-phosphate dehydrogenase [NAD(P)+] (349 aa).

The NADPH site is built by Ser31, Phe32, Arg52, Lys53, and Lys126. Sn-glycerol 3-phosphate contacts are provided by Lys126, Gly154, and Ser156. An NADPH-binding site is contributed by Ala158. Residues Lys209, Asp262, Ser272, Arg273, and Asn274 each coordinate sn-glycerol 3-phosphate. The active-site Proton acceptor is the Lys209. An NADPH-binding site is contributed by Arg273. NADPH contacts are provided by Val297 and Glu299.

It belongs to the NAD-dependent glycerol-3-phosphate dehydrogenase family.

Its subcellular location is the cytoplasm. It catalyses the reaction sn-glycerol 3-phosphate + NAD(+) = dihydroxyacetone phosphate + NADH + H(+). The catalysed reaction is sn-glycerol 3-phosphate + NADP(+) = dihydroxyacetone phosphate + NADPH + H(+). It participates in membrane lipid metabolism; glycerophospholipid metabolism. Functionally, catalyzes the reduction of the glycolytic intermediate dihydroxyacetone phosphate (DHAP) to sn-glycerol 3-phosphate (G3P), the key precursor for phospholipid synthesis. The sequence is that of Glycerol-3-phosphate dehydrogenase [NAD(P)+] from Clostridium tetani (strain Massachusetts / E88).